The following is a 305-amino-acid chain: Serine/threonine-protein phosphatase 6 catalytic subunit (305 aa).

Mn(2+) contacts are provided by D54, H56, D82, and N114. H115 serves as the catalytic Proton donor. 2 residues coordinate Mn(2+): H164 and H238.

It belongs to the PPP phosphatase family. PP-6 (PP-V) subfamily. Requires Mn(2+) as cofactor.

It catalyses the reaction O-phospho-L-seryl-[protein] + H2O = L-seryl-[protein] + phosphate. It carries out the reaction O-phospho-L-threonyl-[protein] + H2O = L-threonyl-[protein] + phosphate. This chain is Serine/threonine-protein phosphatase 6 catalytic subunit (ppp6c), found in Dictyostelium discoideum (Social amoeba).